Consider the following 301-residue polypeptide: Probable cyclic nucleotide phosphodiesterase RER_40650 (301 aa).

Fe cation is bound by residues D20, H22, D61, N95, H167, H205, and H207. Residues H22, D61, and 95–96 each bind AMP; that span reads NH. AMP is bound at residue H207.

Belongs to the cyclic nucleotide phosphodiesterase class-III family. It depends on Fe(2+) as a cofactor.

The protein is Probable cyclic nucleotide phosphodiesterase RER_40650 of Rhodococcus erythropolis (strain PR4 / NBRC 100887).